The primary structure comprises 304 residues: Bifunctional protein FolD (304 aa).

Residues 170–172 (GRS), serine 195, and isoleucine 236 contribute to the NADP(+) site.

The protein belongs to the tetrahydrofolate dehydrogenase/cyclohydrolase family. Homodimer.

It carries out the reaction (6R)-5,10-methylene-5,6,7,8-tetrahydrofolate + NADP(+) = (6R)-5,10-methenyltetrahydrofolate + NADPH. It catalyses the reaction (6R)-5,10-methenyltetrahydrofolate + H2O = (6R)-10-formyltetrahydrofolate + H(+). Its pathway is one-carbon metabolism; tetrahydrofolate interconversion. Its function is as follows. Catalyzes the oxidation of 5,10-methylenetetrahydrofolate to 5,10-methenyltetrahydrofolate and then the hydrolysis of 5,10-methenyltetrahydrofolate to 10-formyltetrahydrofolate. This is Bifunctional protein FolD from Anaplasma phagocytophilum (strain HZ).